Here is a 354-residue protein sequence, read N- to C-terminus: Probable L-ascorbate-6-phosphate lactonase UlaG (354 aa).

It belongs to the UlaG family. A divalent metal cation serves as cofactor.

It is found in the cytoplasm. The enzyme catalyses L-ascorbate 6-phosphate + H2O = 3-dehydro-L-gulonate 6-phosphate. Its pathway is cofactor degradation; L-ascorbate degradation; D-xylulose 5-phosphate from L-ascorbate: step 1/4. Probably catalyzes the hydrolysis of L-ascorbate-6-P into 3-keto-L-gulonate-6-P. Is essential for L-ascorbate utilization under anaerobic conditions. The protein is Probable L-ascorbate-6-phosphate lactonase UlaG of Salmonella gallinarum (strain 287/91 / NCTC 13346).